Reading from the N-terminus, the 698-residue chain is ATP-dependent RNA helicase DHX33 (698 aa).

2 disordered regions span residues methionine 1–proline 20 and threonine 29–serine 50. Residues methionine 1–arginine 71 form a required for nucleolar location region. Over residues alanine 30–arginine 40 the composition is skewed to gly residues. One can recognise a Helicase ATP-binding domain in the interval leucine 75 to glutamate 243. Glycine 88–threonine 95 is a binding site for ATP. The DEAH box motif lies at aspartate 185–histidine 188. The 171-residue stretch at glutamine 271–lysine 441 folds into the Helicase C-terminal domain. The tract at residues alanine 462–leucine 553 is HA2; required for interaction with EIF3G and RPL26. The short motif at valine 536 to histidine 550 is the Critical for rDNA-binding element.

The protein belongs to the DEAD box helicase family. DEAH subfamily. As to quaternary structure, interacts with UBTF. Interacts with DDX3X, EIF3G and EIF3H; the interaction is independent of RNA. Interacts (via HA2 region and Helicase C-terminal domain) with the components of the large ribosomal subunit RPL3, RPL7, RPL26 and RPL27. Binds to mRNA. Interacts (via the helicase C-terminal domain) with MAVS. Binds to double-stranded RNA (via the helicase C-terminal domain). Post-translationally, ubiquitinated, leading to its degradation by the proteasome. Deubiquitinated by USP36.

The protein localises to the nucleus. The protein resides in the nucleolus. Its subcellular location is the nucleoplasm. It localises to the cytoplasm. It is found in the inflammasome. The catalysed reaction is ATP + H2O = ADP + phosphate + H(+). Implicated in nucleolar organization, ribosome biogenesis, protein synthesis and cytoplasmic dsRNA sensing. Stimulates RNA polymerase I transcription of the 47S precursor rRNA. Associates with ribosomal DNA (rDNA) loci where it is involved in POLR1A recruitment. In the cytoplasm, promotes elongation-competent 80S ribosome assembly at the late stage of mRNA translation initiation. Senses cytosolic dsRNA mediating NLRP3 inflammasome formation in macrophages and type I interferon production in myeloid dendritic cells. Required for NLRP3 activation induced by viral dsRNA and bacterial RNA. In dendritic cells, required for induction of type I interferon production induced by cytoplasmic dsRNA via the activation of MAPK and NF-kappa-B signaling pathways. The sequence is that of ATP-dependent RNA helicase DHX33 from Mus musculus (Mouse).